The chain runs to 210 residues: 2-hydroxy-3-keto-5-methylthiopentenyl-1-phosphate phosphatase (210 aa).

It belongs to the HAD-like hydrolase superfamily. MtnX family.

The catalysed reaction is 2-hydroxy-5-methylsulfanyl-3-oxopent-1-enyl phosphate + H2O = 1,2-dihydroxy-5-(methylsulfanyl)pent-1-en-3-one + phosphate. The protein operates within amino-acid biosynthesis; L-methionine biosynthesis via salvage pathway; L-methionine from S-methyl-5-thio-alpha-D-ribose 1-phosphate: step 4/6. In terms of biological role, dephosphorylates 2-hydroxy-3-keto-5-methylthiopentenyl-1-phosphate (HK-MTPenyl-1-P) yielding 1,2-dihydroxy-3-keto-5-methylthiopentene (DHK-MTPene). In Microcystis aeruginosa (strain NIES-843 / IAM M-2473), this protein is 2-hydroxy-3-keto-5-methylthiopentenyl-1-phosphate phosphatase.